Consider the following 307-residue polypeptide: tRNA(Met) cytidine acetate ligase (307 aa).

ATP is bound by residues 12 to 25, G106, N163, and R188; that span reads VVEYNPFHNGHIYQ.

The protein belongs to the TmcAL family.

It is found in the cytoplasm. The enzyme catalyses cytidine(34) in elongator tRNA(Met) + acetate + ATP = N(4)-acetylcytidine(34) in elongator tRNA(Met) + AMP + diphosphate. In terms of biological role, catalyzes the formation of N(4)-acetylcytidine (ac(4)C) at the wobble position of elongator tRNA(Met), using acetate and ATP as substrates. First activates an acetate ion to form acetyladenylate (Ac-AMP) and then transfers the acetyl group to tRNA to form ac(4)C34. The polypeptide is tRNA(Met) cytidine acetate ligase (Mycoplasmopsis synoviae (strain 53) (Mycoplasma synoviae)).